Here is a 192-residue protein sequence, read N- to C-terminus: Signal peptidase complex catalytic subunit sec11 (192 aa).

At 1-18 the chain is on the cytoplasmic side; it reads MLSFLSSNLSNTRQSIAQ. The helical; Signal-anchor for type II membrane protein transmembrane segment at 19-39 threads the bilayer; that stretch reads VLNFALVLSTAFMLWKGLSVV. Residues 40-192 lie on the Lumenal side of the membrane; the sequence is TASSSPIVVV…MGLMVILQRE (153 aa). Residues S53, H92, and D134 each act as charge relay system in the active site. The C-terminal short (CTS) helix stretch occupies residues 178–189; that stretch reads VLLGIMGLMVIL.

Belongs to the peptidase S26B family. Component of the signal peptidase complex (SPC) composed of a catalytic subunit SEC11 and three accessory subunits SPC1, SPC2 and SPC3. The complex induces a local thinning of the ER membrane which is used to measure the length of the signal peptide (SP) h-region of protein substrates. This ensures the selectivity of the complex towards h-regions shorter than 18-20 amino acids. SPC associates with the translocon complex.

It is found in the endoplasmic reticulum membrane. The catalysed reaction is Cleavage of hydrophobic, N-terminal signal or leader sequences from secreted and periplasmic proteins.. In terms of biological role, catalytic component of the signal peptidase complex (SPC) which catalyzes the cleavage of N-terminal signal sequences from nascent proteins as they are translocated into the lumen of the endoplasmic reticulum. Specifically cleaves N-terminal signal peptides that contain a hydrophobic alpha-helix (h-region) shorter than 18-20 amino acids. This Emericella nidulans (strain FGSC A4 / ATCC 38163 / CBS 112.46 / NRRL 194 / M139) (Aspergillus nidulans) protein is Signal peptidase complex catalytic subunit sec11 (sec11).